Consider the following 503-residue polypeptide: Probable cytosol aminopeptidase (503 aa).

Mn(2+) contacts are provided by K271 and D276. Residue K283 is part of the active site. D294, D353, and E355 together coordinate Mn(2+). Residue R357 is part of the active site.

This sequence belongs to the peptidase M17 family. It depends on Mn(2+) as a cofactor.

The protein resides in the cytoplasm. The enzyme catalyses Release of an N-terminal amino acid, Xaa-|-Yaa-, in which Xaa is preferably Leu, but may be other amino acids including Pro although not Arg or Lys, and Yaa may be Pro. Amino acid amides and methyl esters are also readily hydrolyzed, but rates on arylamides are exceedingly low.. The catalysed reaction is Release of an N-terminal amino acid, preferentially leucine, but not glutamic or aspartic acids.. Presumably involved in the processing and regular turnover of intracellular proteins. Catalyzes the removal of unsubstituted N-terminal amino acids from various peptides. The sequence is that of Probable cytosol aminopeptidase from Chlorobaculum parvum (strain DSM 263 / NCIMB 8327) (Chlorobium vibrioforme subsp. thiosulfatophilum).